Here is a 149-residue protein sequence, read N- to C-terminus: Vesicle-associated protein 3-1 (149 aa).

M1 carries the post-translational modification N-acetylmethionine. S2 is subject to N-acetylserine; in Vesicle-associated protein 3-1, N-terminally processed. The region spanning 6–126 (LLEIEPMYLQ…EETKLRVTYV (121 aa)) is the MSP domain.

It belongs to the VAMP-associated protein (VAP) (TC 9.B.17) family.

Functionally, may play a role in vesicle trafficking. The chain is Vesicle-associated protein 3-1 (PVA31) from Arabidopsis thaliana (Mouse-ear cress).